The chain runs to 179 residues: Large ribosomal subunit protein uL5 (179 aa).

Belongs to the universal ribosomal protein uL5 family. As to quaternary structure, part of the 50S ribosomal subunit; part of the 5S rRNA/L5/L18/L25 subcomplex. Contacts the 5S rRNA and the P site tRNA. Forms a bridge to the 30S subunit in the 70S ribosome.

In terms of biological role, this is one of the proteins that bind and probably mediate the attachment of the 5S RNA into the large ribosomal subunit, where it forms part of the central protuberance. In the 70S ribosome it contacts protein S13 of the 30S subunit (bridge B1b), connecting the 2 subunits; this bridge is implicated in subunit movement. Contacts the P site tRNA; the 5S rRNA and some of its associated proteins might help stabilize positioning of ribosome-bound tRNAs. The polypeptide is Large ribosomal subunit protein uL5 (Delftia acidovorans (strain DSM 14801 / SPH-1)).